A 184-amino-acid polypeptide reads, in one-letter code: Large ribosomal subunit protein uL6 (184 aa).

The protein belongs to the universal ribosomal protein uL6 family. In terms of assembly, part of the 50S ribosomal subunit.

This protein binds to the 23S rRNA, and is important in its secondary structure. It is located near the subunit interface in the base of the L7/L12 stalk, and near the tRNA binding site of the peptidyltransferase center. The chain is Large ribosomal subunit protein uL6 from Thermomicrobium roseum (strain ATCC 27502 / DSM 5159 / P-2).